A 204-amino-acid polypeptide reads, in one-letter code: Large ribosomal subunit protein eL15 (204 aa).

Belongs to the eukaryotic ribosomal protein eL15 family. As to quaternary structure, component of the large ribosomal subunit.

It is found in the cytoplasm. Its function is as follows. Component of the large ribosomal subunit. The ribosome is a large ribonucleoprotein complex responsible for the synthesis of proteins in the cell. This is Large ribosomal subunit protein eL15 (rpl15) from Mylopharyngodon piceus (Black carp).